Reading from the N-terminus, the 129-residue chain is Small ribosomal subunit protein uS11 (129 aa).

This sequence belongs to the universal ribosomal protein uS11 family. In terms of assembly, part of the 30S ribosomal subunit. Interacts with proteins S7 and S18. Binds to IF-3.

Functionally, located on the platform of the 30S subunit, it bridges several disparate RNA helices of the 16S rRNA. Forms part of the Shine-Dalgarno cleft in the 70S ribosome. In Lactiplantibacillus plantarum (strain ATCC BAA-793 / NCIMB 8826 / WCFS1) (Lactobacillus plantarum), this protein is Small ribosomal subunit protein uS11.